Consider the following 818-residue polypeptide: BDNF/NT-3 growth factors receptor (818 aa).

The signal sequence occupies residues 1–31 (MVSWRRRPGPGLARLWGLCCLVLGCWRGALG). Disulfide bonds link Cys32/Cys38 and Cys36/Cys45. Over 32 to 426 (CPASCRCSSW…DVSNKENEDS (395 aa)) the chain is Extracellular. N-linked (GlcNAc...) asparagine glycosylation occurs at Asn66. The LRR 1 repeat unit spans residues 71 to 92 (YIANQRKLESINDNEVGFYVGL). Residue Asn94 is glycosylated (N-linked (GlcNAc...) asparagine). Residues 95-116 (LTVVDSGLRFVSRQAFVKNINL) form an LRR 2 repeat. Asn120 carries N-linked (GlcNAc...) asparagine glycosylation. Cystine bridges form between Cys151/Cys175 and Cys153/Cys193. One can recognise an Ig-like C2-type 1 domain in the interval 196-281 (PSANLSNYNI…GEVQTSAELT (86 aa)). N-linked (GlcNAc...) asparagine glycans are attached at residues Asn199, Asn204, Asn226, Asn253, Asn287, Asn324, and Asn337. A disulfide bond links Cys217 and Cys265. The Ig-like C2-type 2 domain maps to 295–364 (TPDHHWCIPF…NGAYTLLAKN (70 aa)). Cys301 and Cys344 form a disulfide bridge. The provides specificity for BDNF as ligand versus NTF3 and NTF4 stretch occupies residues 384–394 (GSGPIVDPDVY). Positions 400 to 418 (PNDLGDTTNNSNQITSPDV) are enriched in polar residues. A disordered region spans residues 400–420 (PNDLGDTTNNSNQITSPDVSN). Asn408 is a glycosylation site (N-linked (GlcNAc...) asparagine). A helical transmembrane segment spans residues 427–450 (ITVYVVVGIAALVCTGLVIMLIIL). Residues 451–818 (KFGRHSKFGM…ASPVYLDILG (368 aa)) lie on the Cytoplasmic side of the membrane. Residues 469–494 (NDDDSASPLHHISNGSNTPSSSEGGP) form a disordered region. A compositionally biased stretch (polar residues) spans 481-491 (SNGSNTPSSSE). The residue at position 512 (Tyr512) is a Phosphotyrosine; by autocatalysis. Residues 534–803 (IVLKRELGEG…LNIKEIHSLL (270 aa)) form the Protein kinase domain. ATP-binding positions include 540-548 (LGEGAFGKV) and Lys568. Asp672 serves as the catalytic Proton acceptor. Phosphotyrosine; by autocatalysis is present on residues Tyr698, Tyr702, Tyr703, and Tyr813.

It belongs to the protein kinase superfamily. Tyr protein kinase family. Insulin receptor subfamily. In terms of assembly, exists in a dynamic equilibrium between monomeric (low affinity) and dimeric (high affinity) structures. Interacts (phosphorylated upon activation by BDNF) with SHC1; mediates SHC1 phosphorylation and activation. Interacts (phosphorylated upon activation by BDNF) with PLCG1 and/or PLCG2; mediates PLCG1 phosphorylation and activation. Interacts with SH2B1 and SH2B2. Interacts with NGFR; may regulate the ligand specificity of the receptor. Interacts with SORCS2; this interaction is important for normal targeting to post-synaptic densities in response to high-frequency stimulation. Interacts (phosphorylated upon ligand-binding) with SH2D1A; regulates NTRK2. Interacts with SQSTM1 and KIDINS220. Interacts (phosphorylated upon ligand-binding) with FRS2; activates the MAPK signaling pathway. Interacts with APPL1. Interacts with MAPK8IP3/JIP3 and KLC1; interaction with KLC1 is mediated by MAPK8IP3/JIP3. In terms of processing, ligand-mediated auto-phosphorylation. In terms of tissue distribution, detected in embryonic brain and orsal root ganglia.

It localises to the cell membrane. The protein localises to the endosome membrane. It is found in the cell projection. Its subcellular location is the axon. The protein resides in the dendrite. It localises to the cytoplasm. The protein localises to the perinuclear region. It is found in the postsynaptic density. It catalyses the reaction L-tyrosyl-[protein] + ATP = O-phospho-L-tyrosyl-[protein] + ADP + H(+). With respect to regulation, the neuronal activity and the influx of calcium positively regulate the kinase activity and the internalization of the receptor which are both important for active signaling. Regulated by NGFR that may control the internalization of the receptor. NGFR may also stimulate the activation by BDNF compared to NTF3 and NTF4. The formation of active receptors dimers able to fully transduce the ligand-mediated signal, may be negatively regulated by the formation of inactive heterodimers with the non-catalytic isoforms. In terms of biological role, receptor tyrosine kinase involved in the development and the maturation of the central and the peripheral nervous systems through regulation of neuron survival, proliferation, migration, differentiation, and synapse formation and plasticity. Receptor for BDNF/brain-derived neurotrophic factor and NTF4/neurotrophin-4. Alternatively can also bind NTF3/neurotrophin-3 which is less efficient in activating the receptor but regulates neuron survival through NTRK2. Upon ligand-binding, undergoes homodimerization, autophosphorylation and activation. Recruits, phosphorylates and/or activates several downstream effectors including SHC1, FRS2, SH2B1, SH2B2 and PLCG1 that regulate distinct overlapping signaling cascades. Through SHC1, FRS2, SH2B1, SH2B2 activates the GRB2-Ras-MAPK cascade that regulates for instance neuronal differentiation including neurite outgrowth. Through the same effectors controls the Ras-PI3 kinase-AKT1 signaling cascade that mainly regulates growth and survival. Through PLCG1 and the downstream protein kinase C-regulated pathways controls synaptic plasticity. Thereby, plays a role in learning and memory by regulating both short term synaptic function and long-term potentiation. PLCG1 also leads to NF-Kappa-B activation and the transcription of genes involved in cell survival. Hence, it is able to suppress anoikis, the apoptosis resulting from loss of cell-matrix interactions. May also play a role in neutrophin-dependent calcium signaling in glial cells and mediate communication between neurons and glia. This is BDNF/NT-3 growth factors receptor (NTRK2) from Gallus gallus (Chicken).